Reading from the N-terminus, the 152-residue chain is Deoxyuridine 5'-triphosphate nucleotidohydrolase (152 aa).

Substrate contacts are provided by residues 71-73, Asn-84, 88-90, and Lys-98; these read RSG and LID.

This sequence belongs to the dUTPase family. Mg(2+) is required as a cofactor.

The catalysed reaction is dUTP + H2O = dUMP + diphosphate + H(+). It participates in pyrimidine metabolism; dUMP biosynthesis; dUMP from dCTP (dUTP route): step 2/2. Its function is as follows. This enzyme is involved in nucleotide metabolism: it produces dUMP, the immediate precursor of thymidine nucleotides and it decreases the intracellular concentration of dUTP so that uracil cannot be incorporated into DNA. This is Deoxyuridine 5'-triphosphate nucleotidohydrolase from Legionella pneumophila (strain Paris).